A 638-amino-acid polypeptide reads, in one-letter code: DNA gyrase subunit B (638 aa).

Positions 423–537 (CEVYIVEGDS…KGHVYLAMPP (115 aa)) constitute a Toprim domain. Mg(2+)-binding residues include E429, D502, and D504.

Belongs to the type II topoisomerase GyrB family. As to quaternary structure, heterotetramer, composed of two GyrA and two GyrB chains. In the heterotetramer, GyrA contains the active site tyrosine that forms a transient covalent intermediate with DNA, while GyrB binds cofactors and catalyzes ATP hydrolysis. The cofactor is Mg(2+). Mn(2+) is required as a cofactor. Requires Ca(2+) as cofactor.

It is found in the cytoplasm. It carries out the reaction ATP-dependent breakage, passage and rejoining of double-stranded DNA.. In terms of biological role, a type II topoisomerase that negatively supercoils closed circular double-stranded (ds) DNA in an ATP-dependent manner to modulate DNA topology and maintain chromosomes in an underwound state. Negative supercoiling favors strand separation, and DNA replication, transcription, recombination and repair, all of which involve strand separation. Also able to catalyze the interconversion of other topological isomers of dsDNA rings, including catenanes and knotted rings. Type II topoisomerases break and join 2 DNA strands simultaneously in an ATP-dependent manner. This is DNA gyrase subunit B from Treponema denticola (strain ATCC 35405 / DSM 14222 / CIP 103919 / JCM 8153 / KCTC 15104).